The sequence spans 472 residues: Protein translocase subunit SecD (472 aa).

Transmembrane regions (helical) follow at residues 7–27 (LLLLIVVLVIGASFVLVKLPL), 298–318 (LVAGFVGLVLVLVFMAVYYRL), 326–345 (SLMIYAVLTLAAFALVGVTL), 349–368 (GIAGFILSIGMAVDANVLIF), 392–414 (AFSSILDSNVTTLIACAALFWFG), and 432–452 (SLFTALTCSRTLLLVIVLSLP).

Belongs to the SecD/SecF family. SecD subfamily. Forms a complex with SecF. Part of the essential Sec protein translocation apparatus which comprises SecA, SecYEG and auxiliary proteins SecDF. Other proteins may also be involved.

The protein localises to the cell inner membrane. Functionally, part of the Sec protein translocase complex. Interacts with the SecYEG preprotein conducting channel. SecDF uses the proton motive force (PMF) to complete protein translocation after the ATP-dependent function of SecA. Its function is as follows. Probably participates in protein translocation into and across both the cytoplasmic and thylakoid membranes in cyanobacterial cells. In Synechocystis sp. (strain ATCC 27184 / PCC 6803 / Kazusa), this protein is Protein translocase subunit SecD.